The chain runs to 294 residues: NAD kinase (294 aa).

Residue aspartate 74 is the Proton acceptor of the active site. NAD(+) is bound by residues 74–75 (DG), 148–149 (NE), histidine 159, arginine 176, aspartate 178, 189–194 (TAYSLS), and glutamine 249.

This sequence belongs to the NAD kinase family. A divalent metal cation serves as cofactor.

The protein localises to the cytoplasm. It carries out the reaction NAD(+) + ATP = ADP + NADP(+) + H(+). Functionally, involved in the regulation of the intracellular balance of NAD and NADP, and is a key enzyme in the biosynthesis of NADP. Catalyzes specifically the phosphorylation on 2'-hydroxyl of the adenosine moiety of NAD to yield NADP. In Vibrio vulnificus (strain CMCP6), this protein is NAD kinase.